A 459-amino-acid chain; its full sequence is uncharacterized protein (459 aa).

In terms of domain architecture, TRAM spans 5-63 (PVEEGQKFPLTIRRMGINGEGIGYFKKAVVFVPGAITGEEVVVEAVKVRDRFTEAKLNK). [4Fe-4S] cluster contacts are provided by cysteine 76, cysteine 82, cysteine 85, and cysteine 166. S-adenosyl-L-methionine is bound by residues glutamine 290, tyrosine 319, aspartate 340, and aspartate 388. The active-site Nucleophile is the cysteine 415.

Belongs to the class I-like SAM-binding methyltransferase superfamily. RNA M5U methyltransferase family.

This is an uncharacterized protein from Listeria monocytogenes serovar 1/2a (strain ATCC BAA-679 / EGD-e).